Consider the following 162-residue polypeptide: Large ribosomal subunit protein eL24 (162 aa).

2 disordered regions span residues 64–83 (DIHA…PYSR) and 117–162 (ERIK…GGKR). A compositionally biased stretch (basic residues) spans 71 to 81 (KKRRRTTKKPY). Over residues 117–135 (ERIKKTKDEKKAKKAEVTK) the composition is skewed to basic and acidic residues.

It belongs to the eukaryotic ribosomal protein eL24 family.

It localises to the cytoplasm. In Hordeum vulgare (Barley), this protein is Large ribosomal subunit protein eL24 (RPL24).